The primary structure comprises 270 residues: Sec-independent protein translocase protein TatC (270 aa).

A run of 6 helical transmembrane segments spans residues 25-45 (FIAVGVGFVIAYCFKERLFDI), 75-95 (VSLLTGVILATPVLFYEFWMF), 111-131 (VVILSIFFFCVGSSFGYFIVF), 156-176 (LGFASKMLLAFGFVFELPLVL), 195-211 (KYAILIFFTGAALITPP), and 213-233 (VVTQIMMAIPLMILYEISIIG). The segment at 243-270 (SDEEEAAENSDVQTDKSTDDTTPGEDQN) is disordered.

Belongs to the TatC family. As to quaternary structure, the Tat system comprises two distinct complexes: a TatABC complex, containing multiple copies of TatA, TatB and TatC subunits, and a separate TatA complex, containing only TatA subunits. Substrates initially bind to the TatABC complex, which probably triggers association of the separate TatA complex to form the active translocon.

The protein localises to the cell inner membrane. Part of the twin-arginine translocation (Tat) system that transports large folded proteins containing a characteristic twin-arginine motif in their signal peptide across membranes. Together with TatB, TatC is part of a receptor directly interacting with Tat signal peptides. This Desulforapulum autotrophicum (strain ATCC 43914 / DSM 3382 / VKM B-1955 / HRM2) (Desulfobacterium autotrophicum) protein is Sec-independent protein translocase protein TatC.